Here is an 82-residue protein sequence, read N- to C-terminus: Small ribosomal subunit protein bS16 (82 aa).

It belongs to the bacterial ribosomal protein bS16 family.

The chain is Small ribosomal subunit protein bS16 from Saccharophagus degradans (strain 2-40 / ATCC 43961 / DSM 17024).